The following is a 425-amino-acid chain: Protein cab-1 (425 aa).

Residues 1 to 11 (MRYTFSDEKKA) are compositionally biased toward basic and acidic residues. Disordered regions lie at residues 1-20 (MRYTFSDEKKATTTTTSRAK) and 214-251 (LKKTQEKLSEQTPSAKANVESLESAMQTATGEPQVPQK). The interval 205–424 (ENEIAKESEL…EVCNPNFAAQ (220 aa)) is AEX-3-binding. Residues 300 to 320 (LLLLAVGTVMCVGLIGTVAGG) traverse the membrane as a helical segment. The tract at residues 334–355 (DDGEYAPYAGTGPGFRKNKGNK) is disordered.

The protein belongs to the NPDC1/cab-1 family. Binds to the RAB3 GDP/GTP exchange factor aex-3. Expressed in a variety of neurons.

The protein resides in the membrane. The sequence is that of Protein cab-1 (cab-1) from Caenorhabditis elegans.